Consider the following 104-residue polypeptide: Flagellar hook-basal body complex protein FliE (104 aa).

The protein belongs to the FliE family.

It localises to the bacterial flagellum basal body. The chain is Flagellar hook-basal body complex protein FliE from Escherichia coli (strain SE11).